The following is a 154-amino-acid chain: MGLSDGEWQLVLKVWGKVETDITGHGQDVLIRLFKTHPETLEKFDKFKHLKTEDEMKASADLKKHGGVVLTALGSILKKKGQHEAELKPLAQSHATKHKISIKFLEFISEAIIHVLQSKHSADFGADAQAAMGKALELFRNDMATKYKEFGFQG.

One can recognise a Globin domain in the interval 2 to 148 (GLSDGEWQLV…FRNDMATKYK (147 aa)). At serine 4 the chain carries Phosphoserine. Position 65 (histidine 65) interacts with nitrite. Histidine 65 contributes to the O2 binding site. Histidine 94 serves as a coordination point for heme b.

It belongs to the globin family. Monomeric.

It is found in the cytoplasm. The protein localises to the sarcoplasm. It carries out the reaction Fe(III)-heme b-[protein] + nitric oxide + H2O = Fe(II)-heme b-[protein] + nitrite + 2 H(+). It catalyses the reaction H2O2 + AH2 = A + 2 H2O. Its function is as follows. Monomeric heme protein which primary function is to store oxygen and facilitate its diffusion within muscle tissues. Reversibly binds oxygen through a pentacoordinated heme iron and enables its timely and efficient release as needed during periods of heightened demand. Depending on the oxidative conditions of tissues and cells, and in addition to its ability to bind oxygen, it also has a nitrite reductase activity whereby it regulates the production of bioactive nitric oxide. Under stress conditions, like hypoxia and anoxia, it also protects cells against reactive oxygen species thanks to its pseudoperoxidase activity. This is Myoglobin (MB) from Tachyglossus aculeatus aculeatus (Southeast Australian short-beaked echidna).